Consider the following 257-residue polypeptide: Homeobox protein goosecoid (257 aa).

The homeobox DNA-binding region spans 160-219 (KRRHRTIFTDEQLEALENLFQETKYPDVGTREQLARKVHLREEKVEVWFKNRRAKWRRQK). Positions 213-257 (AKWRRQKRSSSEESENAEKWNKTSSSKASPEKREEEGKSDLDSDS) are disordered. Over residues 241–257 (SPEKREEEGKSDLDSDS) the composition is skewed to basic and acidic residues.

Belongs to the paired homeobox family. Bicoid subfamily.

The protein resides in the nucleus. Regulates chordin (CHRD). May play a role in spatial programing within discrete embryonic fields or lineage compartments during organogenesis. In concert with NKX3-2, plays a role in defining the structural components of the middle ear; required for the development of the entire tympanic ring. Probably involved in the regulatory networks that define neural crest cell fate specification and determine mesoderm cell lineages in mammals. This Saguinus labiatus (Red-chested mustached tamarin) protein is Homeobox protein goosecoid (GSC).